Consider the following 605-residue polypeptide: Pyruvate decarboxylase 1 (605 aa).

Residues D67 and H154 each contribute to the substrate site. Residues 432 to 514 are thiamine pyrophosphate binding; the sequence is DSWFNCQKLR…FLINNGGYTI (83 aa). The Mg(2+) site is built by D482, N509, and G511. E515 is a binding site for substrate.

This sequence belongs to the TPP enzyme family. As to quaternary structure, homotetramer. A metal cation serves as cofactor. Requires thiamine diphosphate as cofactor.

It carries out the reaction a 2-oxocarboxylate + H(+) = an aldehyde + CO2. This chain is Pyruvate decarboxylase 1 (PDC1), found in Oryza sativa subsp. japonica (Rice).